A 435-amino-acid chain; its full sequence is DMATS-type prenyltransferase fscG (435 aa).

Dimethylallyl diphosphate is bound by residues arginine 111, lysine 193, tyrosine 195, arginine 259, lysine 261, tyrosine 263, tyrosine 352, and tyrosine 423.

Belongs to the tryptophan dimethylallyltransferase family.

It participates in secondary metabolite biosynthesis. Its function is as follows. DMATS-type prenyltransferase; part of the fragmented gene cluster that mediates the biosynthesis of fusarochromene, a tryptophan-derived metabolite closely related to a group of mycotoxins including fusarochromanone. Within the pathway, fscG catalyzes the prenylation of the primary alcohol produced by fscA which is necessary for the formation of the chromene ring by the oxidoreductase fscI. The first step of the pathway is the epimerization of L-tryptophan to D-tryptophan in the presence of the NRPS-like tryptophan epimerase fscC. D-tryptophan is subsequently hydroxylated by the tryptophan 6-hydroxylase fscE to yield 6-hydroxytryptophan. The pyrrole ring undergoes cleavaged by the tryptophan 2,3-dioxygenase fscD and is finally converted to 4-hydroxykyrunenine by the hydrolase fscH. The NRPS-like oxidoreductase fscA reduces the carboxyl group to primary alcohol and the DMATS-type prenyltransferase fscG performs prenylation, followed by the formation of a chromene ring catalyzed by the oxidoreductase fscI, which leads to desacetylfusarochromene. Epoxidation by fscF and rearrangement reactions of chromene double bonds convert compound desacetylfusarochromene to fusarochromanones. Although specific acetyltransferases were not found near the fsc gene cluster, several predicted enzymes containing the N-acetyltransferase superfamily domain are present in the genome of F.equiseti. These predicted enzymes may have the potential to convert desacetylfusarochromene to fusarochromene. The polypeptide is DMATS-type prenyltransferase fscG (Fusarium equiseti (Fusarium scirpi)).